The following is a 376-amino-acid chain: Queuine tRNA-ribosyltransferase (376 aa).

Asp-92 functions as the Proton acceptor in the catalytic mechanism. Residues 92-96, Asp-146, Gln-190, and Gly-217 contribute to the substrate site; that span reads DSGGF. Residues 248–254 form an RNA binding region; that stretch reads GVGRPED. Asp-267 serves as the catalytic Nucleophile. Residues 272–276 form an RNA binding; important for wobble base 34 recognition region; the sequence is TRNAR. Positions 305, 307, 310, and 337 each coordinate Zn(2+).

The protein belongs to the queuine tRNA-ribosyltransferase family. Homodimer. Within each dimer, one monomer is responsible for RNA recognition and catalysis, while the other monomer binds to the replacement base PreQ1. It depends on Zn(2+) as a cofactor.

It catalyses the reaction 7-aminomethyl-7-carbaguanine + guanosine(34) in tRNA = 7-aminomethyl-7-carbaguanosine(34) in tRNA + guanine. Its pathway is tRNA modification; tRNA-queuosine biosynthesis. Its function is as follows. Catalyzes the base-exchange of a guanine (G) residue with the queuine precursor 7-aminomethyl-7-deazaguanine (PreQ1) at position 34 (anticodon wobble position) in tRNAs with GU(N) anticodons (tRNA-Asp, -Asn, -His and -Tyr). Catalysis occurs through a double-displacement mechanism. The nucleophile active site attacks the C1' of nucleotide 34 to detach the guanine base from the RNA, forming a covalent enzyme-RNA intermediate. The proton acceptor active site deprotonates the incoming PreQ1, allowing a nucleophilic attack on the C1' of the ribose to form the product. After dissociation, two additional enzymatic reactions on the tRNA convert PreQ1 to queuine (Q), resulting in the hypermodified nucleoside queuosine (7-(((4,5-cis-dihydroxy-2-cyclopenten-1-yl)amino)methyl)-7-deazaguanosine). This chain is Queuine tRNA-ribosyltransferase, found in Stenotrophomonas maltophilia (strain R551-3).